We begin with the raw amino-acid sequence, 295 residues long: Bifunctional protein FolD (295 aa).

NADP(+) is bound by residues 166-168, serine 191, and isoleucine 232; that span reads GRS.

Belongs to the tetrahydrofolate dehydrogenase/cyclohydrolase family. Homodimer.

It carries out the reaction (6R)-5,10-methylene-5,6,7,8-tetrahydrofolate + NADP(+) = (6R)-5,10-methenyltetrahydrofolate + NADPH. The enzyme catalyses (6R)-5,10-methenyltetrahydrofolate + H2O = (6R)-10-formyltetrahydrofolate + H(+). It participates in one-carbon metabolism; tetrahydrofolate interconversion. Its function is as follows. Catalyzes the oxidation of 5,10-methylenetetrahydrofolate to 5,10-methenyltetrahydrofolate and then the hydrolysis of 5,10-methenyltetrahydrofolate to 10-formyltetrahydrofolate. This is Bifunctional protein FolD from Rhodopseudomonas palustris (strain BisB5).